Here is a 64-residue protein sequence, read N- to C-terminus: Large ribosomal subunit protein bL35 (64 aa).

Belongs to the bacterial ribosomal protein bL35 family.

This chain is Large ribosomal subunit protein bL35, found in Ectopseudomonas mendocina (strain ymp) (Pseudomonas mendocina).